Here is a 110-residue protein sequence, read N- to C-terminus: Ribonuclease P protein component 1 (110 aa).

This sequence belongs to the eukaryotic/archaeal RNase P protein component 1 family. In terms of assembly, consists of a catalytic RNA component and at least 4-5 protein subunits.

The protein resides in the cytoplasm. It catalyses the reaction Endonucleolytic cleavage of RNA, removing 5'-extranucleotides from tRNA precursor.. Part of ribonuclease P, a protein complex that generates mature tRNA molecules by cleaving their 5'-ends. This is Ribonuclease P protein component 1 from Methanosarcina barkeri (strain Fusaro / DSM 804).